We begin with the raw amino-acid sequence, 338 residues long: Beta-ketoacyl-[acyl-carrier-protein] synthase III 2 (338 aa).

Residues cysteine 119 and histidine 255 contribute to the active site. Residues 256–260 are ACP-binding; it reads QANIR. Residue asparagine 285 is part of the active site.

Belongs to the thiolase-like superfamily. FabH family. In terms of assembly, homodimer.

It is found in the cytoplasm. It catalyses the reaction malonyl-[ACP] + acetyl-CoA + H(+) = 3-oxobutanoyl-[ACP] + CO2 + CoA. Its pathway is lipid metabolism; fatty acid biosynthesis. In terms of biological role, catalyzes the condensation reaction of fatty acid synthesis by the addition to an acyl acceptor of two carbons from malonyl-ACP. Catalyzes the first condensation reaction which initiates fatty acid synthesis and may therefore play a role in governing the total rate of fatty acid production. Possesses both acetoacetyl-ACP synthase and acetyl transacylase activities. Its substrate specificity determines the biosynthesis of branched-chain and/or straight-chain of fatty acids. This is Beta-ketoacyl-[acyl-carrier-protein] synthase III 2 from Deinococcus radiodurans (strain ATCC 13939 / DSM 20539 / JCM 16871 / CCUG 27074 / LMG 4051 / NBRC 15346 / NCIMB 9279 / VKM B-1422 / R1).